Reading from the N-terminus, the 163-residue chain is Neurotrophin-3 (163 aa).

The first 3 residues, 1-3 (IQS), serve as a signal peptide directing secretion. A propeptide spanning residues 4–119 (TSMDQGILTE…ALNRTSRRKR (116 aa)) is cleaved from the precursor. Disordered regions lie at residues 38–60 (ARTK…ATAS) and 90–131 (LLSE…YSVC). An N-linked (GlcNAc...) asparagine glycan is attached at Asn-112.

Belongs to the NGF-beta family.

The protein resides in the secreted. In terms of biological role, seems to promote the survival of visceral and proprioceptive sensory neurons. In Eunectes notaeus (Yellow anaconda), this protein is Neurotrophin-3 (NTF3).